Consider the following 183-residue polypeptide: Translation initiation factor IF-3 (183 aa).

It belongs to the IF-3 family. As to quaternary structure, monomer.

It localises to the cytoplasm. Its function is as follows. IF-3 binds to the 30S ribosomal subunit and shifts the equilibrium between 70S ribosomes and their 50S and 30S subunits in favor of the free subunits, thus enhancing the availability of 30S subunits on which protein synthesis initiation begins. The sequence is that of Translation initiation factor IF-3 from Vibrio cholerae serotype O1 (strain ATCC 39315 / El Tor Inaba N16961).